The chain runs to 155 residues: Anaerobic ribonucleoside-triphosphate reductase-activating protein (155 aa).

[4Fe-4S] cluster-binding residues include cysteine 26, cysteine 30, and cysteine 33. Residues glycine 32–tyrosine 34 and glycine 74 each bind S-adenosyl-L-methionine.

Belongs to the organic radical-activating enzymes family. As to quaternary structure, forms a tetramer composed of two NrdD and two NrdG subunits. The cofactor is [4Fe-4S] cluster.

It localises to the cytoplasm. The enzyme catalyses glycyl-[protein] + reduced [flavodoxin] + S-adenosyl-L-methionine = glycin-2-yl radical-[protein] + semiquinone [flavodoxin] + 5'-deoxyadenosine + L-methionine + H(+). Activation of anaerobic ribonucleoside-triphosphate reductase under anaerobic conditions by generation of an organic free radical, using S-adenosylmethionine and reduced flavodoxin as cosubstrates to produce 5'-deoxy-adenosine. In Vibrio cholerae serotype O1 (strain ATCC 39315 / El Tor Inaba N16961), this protein is Anaerobic ribonucleoside-triphosphate reductase-activating protein (nrdG).